Reading from the N-terminus, the 447-residue chain is Glutamate--tRNA ligase 1 (447 aa).

The short motif at 10–20 (PSPTGMLHVGN) is the 'HIGH' region element. The 'KMSKS' region signature appears at 240–244 (KISKR). Residue Lys243 coordinates ATP.

This sequence belongs to the class-I aminoacyl-tRNA synthetase family. Glutamate--tRNA ligase type 1 subfamily. Monomer.

Its subcellular location is the cytoplasm. The enzyme catalyses tRNA(Glu) + L-glutamate + ATP = L-glutamyl-tRNA(Glu) + AMP + diphosphate. Its function is as follows. Catalyzes the attachment of glutamate to tRNA(Glu) in a two-step reaction: glutamate is first activated by ATP to form Glu-AMP and then transferred to the acceptor end of tRNA(Glu). The chain is Glutamate--tRNA ligase 1 from Rickettsia prowazekii (strain Madrid E).